Consider the following 944-residue polypeptide: Spindle pole body component 110 (944 aa).

Phosphothreonine is present on Thr-18. A disordered region spans residues 23 to 110 (IKSKRNTTQT…RKRNLIDDLK (88 aa)). The segment covering 28–46 (NTTQTQVVSPTKVPNANNG) has biased composition (polar residues). The short motif at 54 to 59 (KKRQRR) is the Nuclear localization signal element. At Ser-60 the chain carries Phosphoserine; by MPS1. A phosphothreonine; by MPS1 mark is found at Thr-64 and Thr-68. The span at 67-78 (STRLFSEASQFD) shows a compositional bias: polar residues. Ser-80 carries the post-translational modification Phosphoserine. The segment covering 96–110 (NVDKSRKRNLIDDLK) has biased composition (basic and acidic residues). The stretch at 164 to 791 (EIKSLKHEIK…NRRLEERLIL (628 aa)) forms a coiled coil. Ser-529 bears the Phosphoserine mark. 2 short sequence motifs (nuclear localization signal) span residues 726–731 (KEKYKR) and 742–747 (RLRREK). The segment at 900-927 (SFKTVALLVLACVRMKRIAFYRRSDDNR) is calmodulin-binding.

This sequence belongs to the SPC110 family. As to quaternary structure, homodimer. Component of the SPC110 complex containing at least CMD1, SPC29 and SCP110. Interacts with SPC97 and SPC98.

The protein localises to the nucleus. The protein resides in the cytoplasm. Its subcellular location is the cytoskeleton. It is found in the microtubule organizing center. It localises to the spindle pole body. Functionally, component of the spindle pole body (SPB) required for the proper execution of spindle pole body (SPB) duplication. Potential role in cross-linking filaments or anchoring other molecules. It is essential for growth. In Saccharomyces cerevisiae (strain ATCC 204508 / S288c) (Baker's yeast), this protein is Spindle pole body component 110 (SPC110).